The primary structure comprises 603 residues: Elongation factor 4 (603 aa).

In terms of domain architecture, tr-type G spans 7–189 (SRIRNFSIIA…AIVQQVPPPA (183 aa)). GTP contacts are provided by residues 19-24 (DHGKST) and 136-139 (NKID).

Belongs to the TRAFAC class translation factor GTPase superfamily. Classic translation factor GTPase family. LepA subfamily.

It localises to the cell inner membrane. It catalyses the reaction GTP + H2O = GDP + phosphate + H(+). Functionally, required for accurate and efficient protein synthesis under certain stress conditions. May act as a fidelity factor of the translation reaction, by catalyzing a one-codon backward translocation of tRNAs on improperly translocated ribosomes. Back-translocation proceeds from a post-translocation (POST) complex to a pre-translocation (PRE) complex, thus giving elongation factor G a second chance to translocate the tRNAs correctly. Binds to ribosomes in a GTP-dependent manner. This is Elongation factor 4 from Synechocystis sp. (strain ATCC 27184 / PCC 6803 / Kazusa).